Consider the following 302-residue polypeptide: Segregation and condensation protein A (302 aa).

Belongs to the ScpA family. As to quaternary structure, component of a cohesin-like complex composed of ScpA, ScpB and the Smc homodimer, in which ScpA and ScpB bind to the head domain of Smc. The presence of the three proteins is required for the association of the complex with DNA.

It localises to the cytoplasm. In terms of biological role, participates in chromosomal partition during cell division. May act via the formation of a condensin-like complex containing Smc and ScpB that pull DNA away from mid-cell into both cell halves. This chain is Segregation and condensation protein A, found in Xylella fastidiosa (strain 9a5c).